Here is a 199-residue protein sequence, read N- to C-terminus: MRILGLTGSIGMGKSTTAKLFAEAGVPVYDADAAVHQLYEGEAAPAIEAAFPGTTANGKVDRPKLSARVVHDPAAIKQLEQIVHPMLGASRQKFFADAEAANAPVVVLDIPLLFETGGEKRVDAVVVVSTSPELQRERVLARGTMDEAKLNAIIAKQTPDAEKRKRADFVVDTSHGLEPVRAQIAHILAEVVKMPQRRA.

The DPCK domain maps to 3 to 199; that stretch reads ILGLTGSIGM…EVVKMPQRRA (197 aa). 11–16 is an ATP binding site; that stretch reads GMGKST.

The protein belongs to the CoaE family.

It localises to the cytoplasm. It carries out the reaction 3'-dephospho-CoA + ATP = ADP + CoA + H(+). Its pathway is cofactor biosynthesis; coenzyme A biosynthesis; CoA from (R)-pantothenate: step 5/5. Catalyzes the phosphorylation of the 3'-hydroxyl group of dephosphocoenzyme A to form coenzyme A. This is Dephospho-CoA kinase from Bradyrhizobium diazoefficiens (strain JCM 10833 / BCRC 13528 / IAM 13628 / NBRC 14792 / USDA 110).